We begin with the raw amino-acid sequence, 858 residues long: Bifunctional uridylyltransferase/uridylyl-removing enzyme (858 aa).

Residues 1 to 324 (MSASVAAPPP…PATSGVTRVL (324 aa)) are uridylyltransferase. Residues 325–681 (SPGRFVEKQG…ARPSPVGDAL (357 aa)) are uridylyl-removing. The HD domain occupies 443-565 (VDQHILMVLR…VGNERRLTAL (123 aa)). 2 consecutive ACT domains span residues 682-761 (QVLV…PEPS) and 790-858 (ILSV…AIAV).

This sequence belongs to the GlnD family. Mg(2+) serves as cofactor.

The catalysed reaction is [protein-PII]-L-tyrosine + UTP = [protein-PII]-uridylyl-L-tyrosine + diphosphate. The enzyme catalyses [protein-PII]-uridylyl-L-tyrosine + H2O = [protein-PII]-L-tyrosine + UMP + H(+). With respect to regulation, uridylyltransferase (UTase) activity is inhibited by glutamine, while glutamine activates uridylyl-removing (UR) activity. Modifies, by uridylylation and deuridylylation, the PII regulatory proteins (GlnB and homologs), in response to the nitrogen status of the cell that GlnD senses through the glutamine level. Under low glutamine levels, catalyzes the conversion of the PII proteins and UTP to PII-UMP and PPi, while under higher glutamine levels, GlnD hydrolyzes PII-UMP to PII and UMP (deuridylylation). Thus, controls uridylylation state and activity of the PII proteins, and plays an important role in the regulation of nitrogen assimilation and metabolism. The sequence is that of Bifunctional uridylyltransferase/uridylyl-removing enzyme from Burkholderia thailandensis (strain ATCC 700388 / DSM 13276 / CCUG 48851 / CIP 106301 / E264).